The primary structure comprises 350 residues: Probable flap endonuclease 1 homolog (350 aa).

An N-domain region spans residues 1–95; that stretch reads MGITKLAHLI…AVLEKRAQST (95 aa). Asp-34 is a Mg(2+) binding site. DNA is bound at residue Arg-61. Mg(2+) contacts are provided by Asp-77, Glu-130, Glu-132, Asp-151, and Asp-153. Residues 110 to 223 form an I-domain region; that stretch reads NQECLRLLHL…SRALKLIKEH (114 aa). Glu-130 is a DNA binding site. DNA-binding residues include Gly-201 and Asp-203. Asp-203 is a binding site for Mg(2+). The tract at residues 317 to 325 is interaction with PCNA; it reads RQSRLEDFF.

This sequence belongs to the XPG/RAD2 endonuclease family. FEN1 subfamily. In terms of assembly, interacts with PCNA. Three molecules of fen1 bind to one PCNA trimer with each molecule binding to one PCNA monomer. PCNA stimulates the nuclease activity without altering cleavage specificity. Mg(2+) serves as cofactor. In terms of processing, phosphorylated. Phosphorylation upon DNA damage induces relocalization to the nuclear plasma.

It localises to the nucleus. It is found in the nucleolus. Its subcellular location is the nucleoplasm. The protein localises to the mitochondrion. Its function is as follows. Structure-specific nuclease with 5'-flap endonuclease and 5'-3' exonuclease activities involved in DNA replication and repair. During DNA replication, cleaves the 5'-overhanging flap structure that is generated by displacement synthesis when DNA polymerase encounters the 5'-end of a downstream Okazaki fragment. It enters the flap from the 5'-end and then tracks to cleave the flap base, leaving a nick for ligation. Also involved in the long patch base excision repair (LP-BER) pathway, by cleaving within the apurinic/apyrimidinic (AP) site-terminated flap. Acts as a genome stabilization factor that prevents flaps from equilibrating into structures that lead to duplications and deletions. Also possesses 5'-3' exonuclease activity on nicked or gapped double-stranded DNA, and exhibits RNase H activity. Also involved in replication and repair of rDNA and in repairing mitochondrial DNA. The chain is Probable flap endonuclease 1 homolog from Danio rerio (Zebrafish).